Consider the following 431-residue polypeptide: MSREIIIQTNNATIYTTYSTISNIKLFTDNIQPETRVIYLNIDGLIVDGILNNIRQGLNALTNYENYDFSMCTNRNCALINIGGRKFYLPRSLLSDFDFFNEILSETEFDHNQNIIDRSPYVFDKIIDLIDNDDISNTKYFSQDVLSDLQFYKYKKIIGKLFIDNDFAYFKINGNIYDATLECNYDVDRHQVDLEDNDFDNYTIFTNSPTSNDPTHCVLWFDRYMEKLDIESIAEKIRLNDTPLSEYYSHSLEKFDPNYESPDSIEPYYVTTYPNGHTVIYFLFPNVFYPLIYIPKNIGIISHKLVYKERYQPSIIKESYTKYFPKTSIVKIDLNDVLKVMDKNFHDKILLINELYIYSEKVNYTYAEIINNGKIVCRSTLSKCKDSFTINLFNSTYNCIAYNISDNDNSKLVLYSDKETEHNIILKFEYS.

This is an uncharacterized protein from Acanthamoeba polyphaga (Amoeba).